The following is a 237-amino-acid chain: Probable transcriptional regulatory protein NIS_0560 (237 aa).

The protein belongs to the TACO1 family.

The protein resides in the cytoplasm. This is Probable transcriptional regulatory protein NIS_0560 from Nitratiruptor sp. (strain SB155-2).